A 388-amino-acid polypeptide reads, in one-letter code: Lipid-A-disaccharide synthase (388 aa).

Belongs to the LpxB family.

It carries out the reaction a lipid X + a UDP-2-N,3-O-bis[(3R)-3-hydroxyacyl]-alpha-D-glucosamine = a lipid A disaccharide + UDP + H(+). The protein operates within bacterial outer membrane biogenesis; LPS lipid A biosynthesis. In terms of biological role, condensation of UDP-2,3-diacylglucosamine and 2,3-diacylglucosamine-1-phosphate to form lipid A disaccharide, a precursor of lipid A, a phosphorylated glycolipid that anchors the lipopolysaccharide to the outer membrane of the cell. This Saccharophagus degradans (strain 2-40 / ATCC 43961 / DSM 17024) protein is Lipid-A-disaccharide synthase.